The chain runs to 227 residues: ATP synthase F(0) complex subunit a (227 aa).

6 helical membrane-spanning segments follow: residues 9–29 (FASPSYLGIPLIAIAIALPWV), 69–89 (WALLLASLMIFLITINMLGLL), 98–118 (QLSLNMGFAVPLWLATVIIGM), 132–152 (EGTPIPLIPVLIIIETISLFI), 165–185 (LTAGHLLIQLIATAVFVLMPM), and 190–210 (AILTATVLFLLTLLEVAVAMI).

Belongs to the ATPase A chain family. In terms of assembly, component of the ATP synthase complex composed at least of ATP5F1A/subunit alpha, ATP5F1B/subunit beta, ATP5MC1/subunit c (homooctomer), MT-ATP6/subunit a, MT-ATP8/subunit 8, ATP5ME/subunit e, ATP5MF/subunit f, ATP5MG/subunit g, ATP5MK/subunit k, ATP5MJ/subunit j, ATP5F1C/subunit gamma, ATP5F1D/subunit delta, ATP5F1E/subunit epsilon, ATP5PF/subunit F6, ATP5PB/subunit b, ATP5PD/subunit d, ATP5PO/subunit OSCP. ATP synthase complex consists of a soluble F(1) head domain (subunits alpha(3) and beta(3)) - the catalytic core - and a membrane F(0) domain - the membrane proton channel (subunits c, a, 8, e, f, g, k and j). These two domains are linked by a central stalk (subunits gamma, delta, and epsilon) rotating inside the F1 region and a stationary peripheral stalk (subunits F6, b, d, and OSCP). Interacts with DNAJC30; interaction is direct.

It is found in the mitochondrion inner membrane. The enzyme catalyses H(+)(in) = H(+)(out). Subunit a, of the mitochondrial membrane ATP synthase complex (F(1)F(0) ATP synthase or Complex V) that produces ATP from ADP in the presence of a proton gradient across the membrane which is generated by electron transport complexes of the respiratory chain. ATP synthase complex consist of a soluble F(1) head domain - the catalytic core - and a membrane F(1) domain - the membrane proton channel. These two domains are linked by a central stalk rotating inside the F(1) region and a stationary peripheral stalk. During catalysis, ATP synthesis in the catalytic domain of F(1) is coupled via a rotary mechanism of the central stalk subunits to proton translocation. With the subunit c (ATP5MC1), forms the proton-conducting channel in the F(0) domain, that contains two crucial half-channels (inlet and outlet) that facilitate proton movement from the mitochondrial intermembrane space (IMS) into the matrix. Protons are taken up via the inlet half-channel and released through the outlet half-channel, following a Grotthuss mechanism. The protein is ATP synthase F(0) complex subunit a of Carassius auratus (Goldfish).